The following is a 177-amino-acid chain: METIHATTILSVRKNGKIAVGGDGQVSMGNTVMKHTAKKVRRLYNGKVIAGFAGSAADAFTLFELFEKKLIEHGGSVSRAAVELAREWRMDRMLRRLEALLIVCDANESFLISGTGDVISPDDGVLAIGSGGNFALSAARALVENTDLDPKEIITKAMNITADICIYTNHNLVIEEL.

Thr-7 is an active-site residue. Ala-162, Cys-165, and Thr-168 together coordinate Na(+).

It belongs to the peptidase T1B family. HslV subfamily. A double ring-shaped homohexamer of HslV is capped on each side by a ring-shaped HslU homohexamer. The assembly of the HslU/HslV complex is dependent on binding of ATP.

It is found in the cytoplasm. It catalyses the reaction ATP-dependent cleavage of peptide bonds with broad specificity.. With respect to regulation, allosterically activated by HslU binding. In terms of biological role, protease subunit of a proteasome-like degradation complex believed to be a general protein degrading machinery. The sequence is that of ATP-dependent protease subunit HslV from Leptospira biflexa serovar Patoc (strain Patoc 1 / Ames).